The chain runs to 143 residues: Large ribosomal subunit protein uL13 (143 aa).

This sequence belongs to the universal ribosomal protein uL13 family. In terms of assembly, part of the 50S ribosomal subunit.

This protein is one of the early assembly proteins of the 50S ribosomal subunit, although it is not seen to bind rRNA by itself. It is important during the early stages of 50S assembly. This Methylacidiphilum infernorum (isolate V4) (Methylokorus infernorum (strain V4)) protein is Large ribosomal subunit protein uL13.